The sequence spans 151 residues: MQEGQNRKTSSLSILAIAGVEPYQEKPGEEYMNEAQLSHFKRILEAWRNQLRDEVDRTVTHMQDEAANFPDPVDRAAQEEEFSLELRNRDRERKLIKKIEKTLKKVEDEDFGYCESCGVEIGIRRLEARPTADLCIDCKTLAEIREKQMAG.

Residues 34-54 adopt a coiled-coil conformation; the sequence is EAQLSHFKRILEAWRNQLRDE. Zn(2+)-binding residues include cysteine 114, cysteine 117, cysteine 135, and cysteine 138. The dksA C4-type zinc-finger motif lies at 114–138; it reads CESCGVEIGIRRLEARPTADLCIDC.

It belongs to the DksA family. Interacts directly with the RNA polymerase.

The protein localises to the cytoplasm. Transcription factor that acts by binding directly to the RNA polymerase (RNAP). Required for negative regulation of rRNA expression and positive regulation of several amino acid biosynthesis promoters. Also required for regulation of fis expression. The sequence is that of RNA polymerase-binding transcription factor DksA from Salmonella typhi.